We begin with the raw amino-acid sequence, 538 residues long: MFRRNLITSAILLMAPLAFSAQSLAESLTVEQRLELLEKALRETQSELKKYKDEEKKKYTPATVNRSVSTNDQGYAANPFPTSSAAKPDAVLVKNEEKNASETGSIYSSMTLKDFSKFVKDEIGFSYNGYYRSGWGTASHGSPKSWAIGSLGRFGNEYSGWFDLQLKQRVYNENGKRVDAVVMMDGNVGQQYSTGWFGDNAGGENYMQFSDMYVTTKGFLPFAPEADFWVGKHGAPKIEIQMLDWKTQRTDAAAGVGLENWKVGPGKIDIALVREDVDDYDRSLQNKQQINTNTIDLRYKDIPLWDKATLMVSGRYVTANESASEKDNQDNNGYYDWKDTWMFGTSLTQKFDKGGFNEFSFLVANNSIASNFGRYAGASPFTTFNGRYYGDHTGGTAVRLTSQGEAYIGDHFIVANAIVYSFGNDIYSYETGAHSDFESIRAVVRPAYIWDQYNQTGVELGYFTQQNKDANSNKFNESGYKTTLFHTFKVNTSMLTSRPEIRFYATYIKALENELDGFTFEDNKDDQFAVGAQAEIWW.

The first 25 residues, 1–25 (MFRRNLITSAILLMAPLAFSAQSLA), serve as a signal peptide directing secretion. The disordered stretch occupies residues 52 to 82 (KDEEKKKYTPATVNRSVSTNDQGYAANPFPT). Residues 62–73 (ATVNRSVSTNDQ) show a composition bias toward polar residues.

The protein belongs to the porin LamB (TC 1.B.3) family. As to quaternary structure, homomonomer; no physical evidence of a homotrimer has been found, however conductance experiments suggest it may be a homotrimer. The monomer probably consists of 18 antiparallel beta-strands.

It is found in the cell outer membrane. Functionally, part of a cryptic operon that is poorly expressed in vivo. May be an ancestral sugar porin with a broad carbohydrate specificity; it binds aromatic beta-D-glucosides such as arbutin and salicin, but with low affinity compared to the binding of maltooligosaccharides to the LamB porin. This is Cryptic outer membrane porin BglH (bglH) from Escherichia coli (strain K12).